The following is a 1057-amino-acid chain: Probable E3 ubiquitin-protein ligase HERC4 (1057 aa).

7 RCC1 repeats span residues M1–D51, D52–D101, K102–K154, S156–L207, S208–K259, G261–P311, and S313–R366. The 328-residue stretch at K730–I1057 folds into the HECT domain. C1025 functions as the Glycyl thioester intermediate in the catalytic mechanism.

Ubiquitously expressed, highest expression is found in testis during spermiogenesis. It is specifically found in spermatogonia, spermatocytes, and spermatids with little or no expression detectable in the spermatozoa, or interstitial cells.

Its subcellular location is the cytoplasm. It localises to the cytosol. It carries out the reaction S-ubiquitinyl-[E2 ubiquitin-conjugating enzyme]-L-cysteine + [acceptor protein]-L-lysine = [E2 ubiquitin-conjugating enzyme]-L-cysteine + N(6)-ubiquitinyl-[acceptor protein]-L-lysine.. The protein operates within protein modification; protein ubiquitination. Functionally, probable E3 ubiquitin-protein ligase involved in either protein trafficking or in the distribution of cellular structures. Required for spermatozoon maturation and fertility, and for the removal of the cytoplasmic droplet of the spermatozoon. E3 ubiquitin-protein ligases accept ubiquitin from an E2 ubiquitin-conjugating enzyme in the form of a thioester and then directly transfer it to targeted substrates. This is Probable E3 ubiquitin-protein ligase HERC4 (Herc4) from Mus musculus (Mouse).